Consider the following 201-residue polypeptide: 3-isopropylmalate dehydratase small subunit (201 aa).

The protein belongs to the LeuD family. LeuD type 1 subfamily. As to quaternary structure, heterodimer of LeuC and LeuD.

The catalysed reaction is (2R,3S)-3-isopropylmalate = (2S)-2-isopropylmalate. The protein operates within amino-acid biosynthesis; L-leucine biosynthesis; L-leucine from 3-methyl-2-oxobutanoate: step 2/4. Functionally, catalyzes the isomerization between 2-isopropylmalate and 3-isopropylmalate, via the formation of 2-isopropylmaleate. The protein is 3-isopropylmalate dehydratase small subunit of Klebsiella pneumoniae (strain 342).